Here is a 194-residue protein sequence, read N- to C-terminus: Large ribosomal subunit protein eL15 (194 aa).

A disordered region spans residues 165–194 (AGKKGRGLRNKGKGAEKVRPSIRANEGKGK). Residues 167 to 176 (KKGRGLRNKG) are compositionally biased toward basic residues. Residues 177-194 (KGAEKVRPSIRANEGKGK) show a composition bias toward basic and acidic residues.

This sequence belongs to the eukaryotic ribosomal protein eL15 family. In terms of assembly, part of the 50S ribosomal subunit.

The protein is Large ribosomal subunit protein eL15 of Pyrococcus furiosus (strain ATCC 43587 / DSM 3638 / JCM 8422 / Vc1).